Consider the following 273-residue polypeptide: SPRY domain-containing SOCS box protein 4 (273 aa).

The B30.2/SPRY domain occupies 34-233; it reads PARLDQLLDM…MRYINGLDPE (200 aa). The SOCS box domain occupies 234–273; that stretch reads PLPLMDLCRRSIRSALGRQRLRDIGSLPLPQSLKNYLQYQ.

This sequence belongs to the SPSB family. In terms of assembly, component of the probable ECS(SPSB4) E3 ubiquitin-protein ligase complex which contains CUL5, RNF7/RBX2, Elongin BC complex and SPSB4. Interacts with CUL5; RNF7; ELOB and ELOC. Interacts with MET. Interacts (via B30.2/SPRY domain) with PAWR; this interaction occurs in association with the Elongin BC complex. Interacts with NOS2. Interacts with EPHB2.

The protein resides in the cytoplasm. Its subcellular location is the cytosol. The protein operates within protein modification; protein ubiquitination. Substrate recognition component of a SCF-like ECS (Elongin BC-CUL2/5-SOCS-box protein) E3 ubiquitin-protein ligase complex which mediates the ubiquitination and subsequent proteasomal degradation of target proteins. Negatively regulates nitric oxide (NO) production and limits cellular toxicity in activated macrophages by mediating the ubiquitination and proteasomal degradation of NOS2. Acts as a bridge which links NOS2 with the ECS E3 ubiquitin ligase complex components ELOC and CUL5. Diminishes EphB2-dependent cell repulsive responses by mediating the ubiquitination and degradation of the EphB2/CTF2. Regulates cellular clock function by mediating ubiquitination and proteasomal degradation of the circadian transcriptional repressor NR1D1. In Mus musculus (Mouse), this protein is SPRY domain-containing SOCS box protein 4 (Spsb4).